The chain runs to 376 residues: Erythronate-4-phosphate dehydrogenase (376 aa).

2 residues coordinate substrate: Ser-45 and Thr-67. Position 147 (Asp-147) interacts with NAD(+). The active site involves Arg-209. Residue Asp-233 participates in NAD(+) binding. The active site involves Glu-238. His-255 acts as the Proton donor in catalysis. Gly-258 is a binding site for NAD(+). Tyr-259 is a substrate binding site.

Belongs to the D-isomer specific 2-hydroxyacid dehydrogenase family. PdxB subfamily. Homodimer.

The protein resides in the cytoplasm. It catalyses the reaction 4-phospho-D-erythronate + NAD(+) = (R)-3-hydroxy-2-oxo-4-phosphooxybutanoate + NADH + H(+). The protein operates within cofactor biosynthesis; pyridoxine 5'-phosphate biosynthesis; pyridoxine 5'-phosphate from D-erythrose 4-phosphate: step 2/5. Functionally, catalyzes the oxidation of erythronate-4-phosphate to 3-hydroxy-2-oxo-4-phosphonooxybutanoate. This chain is Erythronate-4-phosphate dehydrogenase, found in Shewanella loihica (strain ATCC BAA-1088 / PV-4).